Here is a 553-residue protein sequence, read N- to C-terminus: Phenylalanine--tRNA ligase alpha subunit (553 aa).

The L-phenylalanine site is built by Thr-400 and Phe-479. Glu-481 is a Mg(2+) binding site.

Belongs to the class-II aminoacyl-tRNA synthetase family. Phe-tRNA synthetase alpha subunit type 2 subfamily. As to quaternary structure, tetramer of two alpha and two beta subunits. Mg(2+) is required as a cofactor.

Its subcellular location is the cytoplasm. The catalysed reaction is tRNA(Phe) + L-phenylalanine + ATP = L-phenylalanyl-tRNA(Phe) + AMP + diphosphate + H(+). The protein is Phenylalanine--tRNA ligase alpha subunit of Treponema pallidum (strain Nichols).